The following is a 305-amino-acid chain: Ribonuclease Z (305 aa).

Positions 61, 63, 65, 66, 138, 208, and 266 each coordinate Zn(2+). Residue aspartate 65 is the Proton acceptor of the active site.

The protein belongs to the RNase Z family. In terms of assembly, homodimer. The cofactor is Zn(2+).

It carries out the reaction Endonucleolytic cleavage of RNA, removing extra 3' nucleotides from tRNA precursor, generating 3' termini of tRNAs. A 3'-hydroxy group is left at the tRNA terminus and a 5'-phosphoryl group is left at the trailer molecule.. Zinc phosphodiesterase, which displays some tRNA 3'-processing endonuclease activity. Probably involved in tRNA maturation, by removing a 3'-trailer from precursor tRNA. The chain is Ribonuclease Z from Methanosarcina acetivorans (strain ATCC 35395 / DSM 2834 / JCM 12185 / C2A).